The following is a 143-amino-acid chain: Nucleoside diphosphate kinase (143 aa).

The ATP site is built by Lys-11, Phe-59, Arg-87, Thr-93, Arg-104, and Asn-114. Catalysis depends on His-117, which acts as the Pros-phosphohistidine intermediate.

It belongs to the NDK family. As to quaternary structure, homotetramer. Requires Mg(2+) as cofactor.

Its subcellular location is the cytoplasm. The catalysed reaction is a 2'-deoxyribonucleoside 5'-diphosphate + ATP = a 2'-deoxyribonucleoside 5'-triphosphate + ADP. The enzyme catalyses a ribonucleoside 5'-diphosphate + ATP = a ribonucleoside 5'-triphosphate + ADP. Functionally, major role in the synthesis of nucleoside triphosphates other than ATP. The ATP gamma phosphate is transferred to the NDP beta phosphate via a ping-pong mechanism, using a phosphorylated active-site intermediate. The chain is Nucleoside diphosphate kinase from Salmonella arizonae (strain ATCC BAA-731 / CDC346-86 / RSK2980).